Reading from the N-terminus, the 393-residue chain is Riboflavin biosynthesis protein RibBA (393 aa).

Residues 1–200 are DHBP synthase; sequence MQFDNIDSAL…IDDLIEYRKK (200 aa). D-ribulose 5-phosphate-binding positions include 27 to 28, D32, 139 to 143, and E163; these read RE and RNGHT. E28 serves as a coordination point for Mg(2+). H142 is a binding site for Mg(2+). The GTP cyclohydrolase II stretch occupies residues 201 to 393; the sequence is LEPEIEFKAK…TKKIKMGHLI (193 aa). 249–253 lines the GTP pocket; it reads RLHSA. Positions 254, 265, and 267 each coordinate Zn(2+). Residues Q270, 291 to 293, and T313 contribute to the GTP site; that span reads EGR. D325 serves as the catalytic Proton acceptor; for GTP cyclohydrolase activity. R327 (nucleophile; for GTP cyclohydrolase activity) is an active-site residue. Positions 348 and 353 each coordinate GTP.

This sequence in the N-terminal section; belongs to the DHBP synthase family. The protein in the C-terminal section; belongs to the GTP cyclohydrolase II family. Requires Mg(2+) as cofactor. The cofactor is Mn(2+). Zn(2+) is required as a cofactor.

The catalysed reaction is D-ribulose 5-phosphate = (2S)-2-hydroxy-3-oxobutyl phosphate + formate + H(+). The enzyme catalyses GTP + 4 H2O = 2,5-diamino-6-hydroxy-4-(5-phosphoribosylamino)-pyrimidine + formate + 2 phosphate + 3 H(+). It participates in cofactor biosynthesis; riboflavin biosynthesis; 2-hydroxy-3-oxobutyl phosphate from D-ribulose 5-phosphate: step 1/1. It functions in the pathway cofactor biosynthesis; riboflavin biosynthesis; 5-amino-6-(D-ribitylamino)uracil from GTP: step 1/4. Catalyzes the conversion of D-ribulose 5-phosphate to formate and 3,4-dihydroxy-2-butanone 4-phosphate. Its function is as follows. Catalyzes the conversion of GTP to 2,5-diamino-6-ribosylamino-4(3H)-pyrimidinone 5'-phosphate (DARP), formate and pyrophosphate. The sequence is that of Riboflavin biosynthesis protein RibBA from Staphylococcus aureus (strain MRSA252).